The primary structure comprises 180 residues: Large ribosomal subunit protein uL5 (180 aa).

This sequence belongs to the universal ribosomal protein uL5 family. As to quaternary structure, part of the 50S ribosomal subunit; part of the 5S rRNA/L5/L18/L25 subcomplex. Contacts the 5S rRNA and the P site tRNA. Forms a bridge to the 30S subunit in the 70S ribosome.

Its function is as follows. This is one of the proteins that bind and probably mediate the attachment of the 5S RNA into the large ribosomal subunit, where it forms part of the central protuberance. In the 70S ribosome it contacts protein S13 of the 30S subunit (bridge B1b), connecting the 2 subunits; this bridge is implicated in subunit movement. Contacts the P site tRNA; the 5S rRNA and some of its associated proteins might help stabilize positioning of ribosome-bound tRNAs. The polypeptide is Large ribosomal subunit protein uL5 (Polynucleobacter necessarius subsp. necessarius (strain STIR1)).